We begin with the raw amino-acid sequence, 251 residues long: Urease accessory protein UreF (251 aa).

The tract at residues 1-20 (MAPAPDPAPAGSAAPDPASA) is disordered. Over residues 9–20 (PAGSAAPDPASA) the composition is skewed to low complexity.

Belongs to the UreF family. UreD, UreF and UreG form a complex that acts as a GTP-hydrolysis-dependent molecular chaperone, activating the urease apoprotein by helping to assemble the nickel containing metallocenter of UreC. The UreE protein probably delivers the nickel.

It localises to the cytoplasm. Required for maturation of urease via the functional incorporation of the urease nickel metallocenter. The polypeptide is Urease accessory protein UreF (Paracidovorax citrulli (strain AAC00-1) (Acidovorax citrulli)).